Reading from the N-terminus, the 301-residue chain is Hydrogen peroxide-inducible genes activator (301 aa).

Residues 1–58 form the HTH lysR-type domain; it reads MNIRDLEYLVALSEYKHFRRAADSCNVSQPTLSGQIRKLEDELGIILLERTSRKVLFT. Positions 18-37 form a DNA-binding region, H-T-H motif; sequence FRRAADSCNVSQPTLSGQIR.

This sequence belongs to the LysR transcriptional regulatory family.

Its function is as follows. Required for the induction of a regulon of hydrogen peroxide inducible genes such as catalase and glutathione-reductase. This is Hydrogen peroxide-inducible genes activator (oxyR) from Haemophilus influenzae (strain ATCC 51907 / DSM 11121 / KW20 / Rd).